The primary structure comprises 597 residues: FERM domain-containing protein 3 (597 aa).

One can recognise an FERM domain in the interval 32-312; the sequence is MRCTIRLLDD…ENQAFYKYAK (281 aa). A disordered region spans residues 383–403; the sequence is LLPSPSEQEEELPLGEGVPLP. Residues 531–551 form a helical membrane-spanning segment; it reads LLVVGLGLLLFVFPLLLLLLE.

Ovary-specific.

The protein localises to the membrane. In terms of biological role, putative tumor suppressor gene that may be implicated in the origin and progression of lung cancer. The polypeptide is FERM domain-containing protein 3 (FRMD3) (Homo sapiens (Human)).